A 437-amino-acid polypeptide reads, in one-letter code: UDP-N-acetylmuramoylalanine--D-glutamate ligase (437 aa).

An ATP-binding site is contributed by 112-118 (GSNGKST).

It belongs to the MurCDEF family.

It is found in the cytoplasm. The catalysed reaction is UDP-N-acetyl-alpha-D-muramoyl-L-alanine + D-glutamate + ATP = UDP-N-acetyl-alpha-D-muramoyl-L-alanyl-D-glutamate + ADP + phosphate + H(+). Its pathway is cell wall biogenesis; peptidoglycan biosynthesis. Functionally, cell wall formation. Catalyzes the addition of glutamate to the nucleotide precursor UDP-N-acetylmuramoyl-L-alanine (UMA). In Haemophilus influenzae (strain PittEE), this protein is UDP-N-acetylmuramoylalanine--D-glutamate ligase.